A 246-amino-acid chain; its full sequence is Isoprenyl transferase (246 aa).

Aspartate 18 is an active-site residue. Residue aspartate 18 coordinates Mg(2+). Residues glycine 19–arginine 22, tryptophan 23, arginine 31, histidine 35, and serine 63–glutamate 65 each bind substrate. Asparagine 66 (proton acceptor) is an active-site residue. Substrate is bound by residues tryptophan 67, arginine 69, arginine 186, and arginine 192 to serine 194. Residue glutamate 205 coordinates Mg(2+).

The protein belongs to the UPP synthase family. In terms of assembly, homodimer. Requires Mg(2+) as cofactor.

Catalyzes the condensation of isopentenyl diphosphate (IPP) with allylic pyrophosphates generating different type of terpenoids. This Geobacter sulfurreducens (strain ATCC 51573 / DSM 12127 / PCA) protein is Isoprenyl transferase.